Here is a 158-residue protein sequence, read N- to C-terminus: SsrA-binding protein (158 aa).

The protein belongs to the SmpB family.

It is found in the cytoplasm. In terms of biological role, required for rescue of stalled ribosomes mediated by trans-translation. Binds to transfer-messenger RNA (tmRNA), required for stable association of tmRNA with ribosomes. tmRNA and SmpB together mimic tRNA shape, replacing the anticodon stem-loop with SmpB. tmRNA is encoded by the ssrA gene; the 2 termini fold to resemble tRNA(Ala) and it encodes a 'tag peptide', a short internal open reading frame. During trans-translation Ala-aminoacylated tmRNA acts like a tRNA, entering the A-site of stalled ribosomes, displacing the stalled mRNA. The ribosome then switches to translate the ORF on the tmRNA; the nascent peptide is terminated with the 'tag peptide' encoded by the tmRNA and targeted for degradation. The ribosome is freed to recommence translation, which seems to be the essential function of trans-translation. The chain is SsrA-binding protein from Bartonella tribocorum (strain CIP 105476 / IBS 506).